A 468-amino-acid polypeptide reads, in one-letter code: Glutamate--tRNA ligase (468 aa).

Residues 10-20 (PSPTGDLHIGG) carry the 'HIGH' region motif. Residues cysteine 99, cysteine 101, cysteine 126, and aspartate 128 each coordinate Zn(2+). The 'KMSKS' region signature appears at 236–240 (RLSKR). Residue lysine 239 coordinates ATP.

Belongs to the class-I aminoacyl-tRNA synthetase family. Glutamate--tRNA ligase type 1 subfamily. In terms of assembly, monomer. Requires Zn(2+) as cofactor.

It is found in the cytoplasm. The catalysed reaction is tRNA(Glu) + L-glutamate + ATP = L-glutamyl-tRNA(Glu) + AMP + diphosphate. Catalyzes the attachment of glutamate to tRNA(Glu) in a two-step reaction: glutamate is first activated by ATP to form Glu-AMP and then transferred to the acceptor end of tRNA(Glu). The chain is Glutamate--tRNA ligase from Syntrophobacter fumaroxidans (strain DSM 10017 / MPOB).